A 433-amino-acid polypeptide reads, in one-letter code: O-methyltransferase VdtC (433 aa).

Asp-284 is a binding site for S-adenosyl-L-methionine. The active-site Proton acceptor is His-335.

This sequence belongs to the class I-like SAM-binding methyltransferase superfamily. Cation-independent O-methyltransferase family. COMT subfamily.

The catalysed reaction is 7,9,10-trihydroxy-3-(2-oxopropyl)-1H-benzo[g]isochromen-1-one + S-adenosyl-L-methionine = 9,10-dihydroxy-7-methoxy-3-(2-oxopropyl)-1H-benzo[g]isochromen-1-one + S-adenosyl-L-homocysteine + H(+). It participates in secondary metabolite biosynthesis. Functionally, O-methyltransferase; part of the gene cluster that mediates the biosynthesis of viriditoxin, one of the 'classical' secondary metabolites produced by fungi and that has antibacterial activity. The first step is performed by the polyketide synthase VdtA which condenses one acetyl-CoA and 6 malonyl-CoA units to form the heptaketide monomer backbone of viriditoxin. The product of VdtA is then O-methylated on C7 by the O-methyltransferase VdtC. The O-methyl group is important for the stereoselective coupling of the monomers at the final step of viriditoxin biosynthesis. The short-chain dehydrogenase/reductase VdtF then acts as a stereospecific reductase converting the pyrone to dihydropyrone via the reduction of the C3-C4 double bond. The FAD-binding monooxygenase VdtE then converts the ketone group into a methyl-ester group to yield semi-viriditoxin. Finally, the laccase VdtB is involved in dimerization of 2 semi-viriditoxin molecules to yield the final viriditoxin. VdtB is responsible for the regioselective 6,6'-coupling of semi-viriditoxin, which yields (M)-viriditoxin and (P)-viriditoxin at a ratio of 1:2. The non-catalytic carboxylesterase-like protein VdtD affects the stereochemistical outcome of the coupling. The highly reducing polyketide synthase VdtX is not involved in viriditoxin synthesis, but might possibly play a role in the production of additional metabolites not identified yet. This Byssochlamys spectabilis (Paecilomyces variotii) protein is O-methyltransferase VdtC.